The sequence spans 244 residues: 3-deoxy-manno-octulosonate cytidylyltransferase (244 aa).

The protein belongs to the KdsB family.

The protein localises to the cytoplasm. It catalyses the reaction 3-deoxy-alpha-D-manno-oct-2-ulosonate + CTP = CMP-3-deoxy-beta-D-manno-octulosonate + diphosphate. The protein operates within nucleotide-sugar biosynthesis; CMP-3-deoxy-D-manno-octulosonate biosynthesis; CMP-3-deoxy-D-manno-octulosonate from 3-deoxy-D-manno-octulosonate and CTP: step 1/1. Its pathway is bacterial outer membrane biogenesis; lipopolysaccharide biosynthesis. Its function is as follows. Activates KDO (a required 8-carbon sugar) for incorporation into bacterial lipopolysaccharide in Gram-negative bacteria. In Wolinella succinogenes (strain ATCC 29543 / DSM 1740 / CCUG 13145 / JCM 31913 / LMG 7466 / NCTC 11488 / FDC 602W) (Vibrio succinogenes), this protein is 3-deoxy-manno-octulosonate cytidylyltransferase.